The following is a 172-amino-acid chain: dCTP deaminase, dUMP-forming (172 aa).

DCTP contacts are provided by residues 93-98 (RSSVGR), aspartate 111, 119-121 (TLE), glutamine 138, and tyrosine 151. Glutamate 121 serves as the catalytic Proton donor/acceptor.

The protein belongs to the dCTP deaminase family. Homotrimer.

The enzyme catalyses dCTP + 2 H2O = dUMP + NH4(+) + diphosphate. Its pathway is pyrimidine metabolism; dUMP biosynthesis; dUMP from dCTP: step 1/1. Its function is as follows. Bifunctional enzyme that catalyzes both the deamination of dCTP to dUTP and the hydrolysis of dUTP to dUMP without releasing the toxic dUTP intermediate. The protein is dCTP deaminase, dUMP-forming of Hathewaya histolytica (Clostridium histolyticum).